The sequence spans 159 residues: SsrA-binding protein (159 aa).

This sequence belongs to the SmpB family.

The protein localises to the cytoplasm. In terms of biological role, required for rescue of stalled ribosomes mediated by trans-translation. Binds to transfer-messenger RNA (tmRNA), required for stable association of tmRNA with ribosomes. tmRNA and SmpB together mimic tRNA shape, replacing the anticodon stem-loop with SmpB. tmRNA is encoded by the ssrA gene; the 2 termini fold to resemble tRNA(Ala) and it encodes a 'tag peptide', a short internal open reading frame. During trans-translation Ala-aminoacylated tmRNA acts like a tRNA, entering the A-site of stalled ribosomes, displacing the stalled mRNA. The ribosome then switches to translate the ORF on the tmRNA; the nascent peptide is terminated with the 'tag peptide' encoded by the tmRNA and targeted for degradation. The ribosome is freed to recommence translation, which seems to be the essential function of trans-translation. The polypeptide is SsrA-binding protein (Coxiella burnetii (strain RSA 493 / Nine Mile phase I)).